Consider the following 347-residue polypeptide: Anthranilate phosphoribosyltransferase (347 aa).

5-phospho-alpha-D-ribose 1-diphosphate-binding positions include glycine 88, 91-92 (GD), threonine 96, 98-101 (NIST), 116-124 (KHGGRSVSS), and serine 128. Glycine 88 provides a ligand contact to anthranilate. Serine 100 contacts Mg(2+). Residue arginine 174 participates in anthranilate binding. 2 residues coordinate Mg(2+): aspartate 233 and glutamate 234.

It belongs to the anthranilate phosphoribosyltransferase family. Homodimer. Mg(2+) serves as cofactor.

It carries out the reaction N-(5-phospho-beta-D-ribosyl)anthranilate + diphosphate = 5-phospho-alpha-D-ribose 1-diphosphate + anthranilate. It participates in amino-acid biosynthesis; L-tryptophan biosynthesis; L-tryptophan from chorismate: step 2/5. In terms of biological role, catalyzes the transfer of the phosphoribosyl group of 5-phosphorylribose-1-pyrophosphate (PRPP) to anthranilate to yield N-(5'-phosphoribosyl)-anthranilate (PRA). This is Anthranilate phosphoribosyltransferase from Polaromonas sp. (strain JS666 / ATCC BAA-500).